Consider the following 193-residue polypeptide: Endoribonuclease YbeY (193 aa).

Positions 109, 113, and 119 each coordinate Zn(2+). Positions 143 to 193 (GAALREGRREGRAGEAKDRWTRSPTSISTPSRSGSTARGSRAKTSRAGSRT) are disordered. Over residues 147 to 163 (REGRREGRAGEAKDRWT) the composition is skewed to basic and acidic residues. Residues 164 to 181 (RSPTSISTPSRSGSTARG) show a composition bias toward low complexity.

Belongs to the endoribonuclease YbeY family. Zn(2+) serves as cofactor.

The protein localises to the cytoplasm. In terms of biological role, single strand-specific metallo-endoribonuclease involved in late-stage 70S ribosome quality control and in maturation of the 3' terminus of the 16S rRNA. The sequence is that of Endoribonuclease YbeY from Anaeromyxobacter dehalogenans (strain 2CP-C).